A 342-amino-acid chain; its full sequence is tRNA N6-adenosine threonylcarbamoyltransferase (342 aa).

2 residues coordinate Fe cation: histidine 115 and histidine 119. Residues 138–142, aspartate 171, glycine 184, aspartate 188, and asparagine 276 contribute to the substrate site; that span reads IISGG. A Fe cation-binding site is contributed by aspartate 304.

It belongs to the KAE1 / TsaD family. The cofactor is Fe(2+).

Its subcellular location is the cytoplasm. The enzyme catalyses L-threonylcarbamoyladenylate + adenosine(37) in tRNA = N(6)-L-threonylcarbamoyladenosine(37) in tRNA + AMP + H(+). Required for the formation of a threonylcarbamoyl group on adenosine at position 37 (t(6)A37) in tRNAs that read codons beginning with adenine. Is involved in the transfer of the threonylcarbamoyl moiety of threonylcarbamoyl-AMP (TC-AMP) to the N6 group of A37, together with TsaE and TsaB. TsaD likely plays a direct catalytic role in this reaction. In Endomicrobium trichonymphae, this protein is tRNA N6-adenosine threonylcarbamoyltransferase.